A 279-amino-acid polypeptide reads, in one-letter code: Type III pantothenate kinase (279 aa).

Residue 6-13 coordinates ATP; it reads DIGNTLSK. Residues Tyr-92 and 99–102 each bind substrate; that span reads GVDR. Asp-101 acts as the Proton acceptor in catalysis. Asp-120 provides a ligand contact to K(+). Ser-123 is a binding site for ATP. Thr-177 is a binding site for substrate.

This sequence belongs to the type III pantothenate kinase family. As to quaternary structure, homodimer. NH4(+) is required as a cofactor. The cofactor is K(+).

It localises to the cytoplasm. It catalyses the reaction (R)-pantothenate + ATP = (R)-4'-phosphopantothenate + ADP + H(+). Its pathway is cofactor biosynthesis; coenzyme A biosynthesis; CoA from (R)-pantothenate: step 1/5. In terms of biological role, catalyzes the phosphorylation of pantothenate (Pan), the first step in CoA biosynthesis. This Chromohalobacter salexigens (strain ATCC BAA-138 / DSM 3043 / CIP 106854 / NCIMB 13768 / 1H11) protein is Type III pantothenate kinase.